A 341-amino-acid chain; its full sequence is Uroporphyrinogen decarboxylase (341 aa).

Substrate contacts are provided by residues 23 to 27 (RQAGR), aspartate 73, tyrosine 147, serine 202, and histidine 318.

Belongs to the uroporphyrinogen decarboxylase family. As to quaternary structure, homodimer.

It is found in the cytoplasm. The enzyme catalyses uroporphyrinogen III + 4 H(+) = coproporphyrinogen III + 4 CO2. It participates in porphyrin-containing compound metabolism; protoporphyrin-IX biosynthesis; coproporphyrinogen-III from 5-aminolevulinate: step 4/4. Functionally, catalyzes the decarboxylation of four acetate groups of uroporphyrinogen-III to yield coproporphyrinogen-III. The protein is Uroporphyrinogen decarboxylase of Erythrobacter litoralis (strain HTCC2594).